A 214-amino-acid polypeptide reads, in one-letter code: MFSTKKSQGNLHKYIQRQSTDEFAVKAREHNYRARSAFKLIEINEKFKFLKPESTVIDIGCAPGSWLQVVVQKCPNGYASGVDLQNVLPIRGADILSLSDITDPAVKLKIREKLAHRQVDVVLSDMAPNPTGDNATDHLRLIELCRSVFRLFSVENEIELVKNGVYLCKIWDGSARAEFVRELSDRFSTVKTVKPTACRDNSAELYLFCRNFKK.

Residues 1 to 18 (MFSTKKSQGNLHKYIQRQ) constitute a mitochondrion transit peptide. S-adenosyl-L-methionine-binding positions include 63–66 (PGSW), Asp83, 100–101 (DI), and Asp125. The Proton acceptor role is filled by Lys169.

It belongs to the class I-like SAM-binding methyltransferase superfamily. RNA methyltransferase RlmE family.

Its subcellular location is the mitochondrion. The enzyme catalyses a uridine in rRNA + S-adenosyl-L-methionine = a 2'-O-methyluridine in rRNA + S-adenosyl-L-homocysteine + H(+). In terms of biological role, S-adenosyl-L-methionine-dependent 2'-O-ribose methyltransferase that catalyzes the formation of 2'-O-methyluridine at position 808 (Um808) in the mitochondrial large subunit ribosomal RNA (mtLSU rRNA), a universally conserved modification in the peptidyl transferase domain of the mtLSU rRNA. This activity may require prior 2'-O-methylguanosine modification at position 809 (Gm809) by MRM3. Essential for late-stage assembly of mtLSU required for efficient translation of mitochondrial DNA encoded proteins; methyltransferase activity is not required for this function. Essential for mitochondrial respiratory function. This chain is rRNA methyltransferase 2, mitochondrial, found in Caenorhabditis elegans.